The primary structure comprises 379 residues: Chaperone protein DnaJ (379 aa).

The region spanning 5-69 (EYYERLGVDK…QKRAAYDQYG (65 aa)) is the J domain. The CR-type zinc-finger motif lies at 141–223 (GVEKQVKYNR…CHGSGHEKVA (83 aa)). Zn(2+)-binding residues include Cys-154, Cys-157, Cys-171, Cys-174, Cys-197, Cys-200, Cys-211, and Cys-214. CXXCXGXG motif repeat units lie at residues 154–161 (CHTCGGSG), 171–178 (CHKCGGRG), 197–204 (CDVCHGTG), and 211–218 (CTTCHGSG).

Belongs to the DnaJ family. As to quaternary structure, homodimer. It depends on Zn(2+) as a cofactor.

The protein resides in the cytoplasm. Functionally, participates actively in the response to hyperosmotic and heat shock by preventing the aggregation of stress-denatured proteins and by disaggregating proteins, also in an autonomous, DnaK-independent fashion. Unfolded proteins bind initially to DnaJ; upon interaction with the DnaJ-bound protein, DnaK hydrolyzes its bound ATP, resulting in the formation of a stable complex. GrpE releases ADP from DnaK; ATP binding to DnaK triggers the release of the substrate protein, thus completing the reaction cycle. Several rounds of ATP-dependent interactions between DnaJ, DnaK and GrpE are required for fully efficient folding. Also involved, together with DnaK and GrpE, in the DNA replication of plasmids through activation of initiation proteins. This is Chaperone protein DnaJ from Lactococcus lactis subsp. cremoris (strain MG1363).